The sequence spans 616 residues: MKNIISLVSKKKAASKNEDKNISESSRDIVNQQEVFNTEDFEEGKKDSAFELDHLEFTTNSAQLGDSDEDNENVINEMNATDDANEANSEEKSMTLKQALLKYPKAALWSILVSTTLVMEGYDTALLSALYALPVFQRKFGTLNGEGSYEITSQWQIGLNMCVLCGEMIGLQITTYMVEFMGNRYTMITALGLLTAYIFILYYCKSLAMIAVGQILSAIPWGCFQSLAVTYASEVCPLALRYYMTSYSNICWLFGQIFASGIMKNSQENLGNSDLGYKLPFALQWIWPAPLMIGIFFAPESPWWLVRKDRVAEARKSLSRILSGKGAEKDIQVDLTLKQIELTIEKERLLASKSGSFFNCFKGVNGRRTRLACLTWVAQNSSGAVLLGYSTYFFERAGMATDKAFTFSLIQYCLGLAGTLCSWVISGRVGRWTILTYGLAFQMVCLFIIGGMGFGSGSSASNGAGGLLLALSFFYNAGIGAVVYCIVAEIPSAELRTKTIVLARICYNLMAVINAILTPYMLNVSDWNWGAKTGLYWGGFTAVTLAWVIIDLPETTGRTFSEINELFNQGVPARKFASTVVDPFGKGKTQHDSLADESISQSSSIKQRELNAADKC.

At Met-1–Thr-115 the chain is on the cytoplasmic side. The span at Ser-15 to Arg-27 shows a compositional bias: basic and acidic residues. The tract at residues Ser-15 to Asp-40 is disordered. A helical transmembrane segment spans residues Thr-116 to Phe-136. Over Gln-137–Asn-160 the chain is Extracellular. The helical transmembrane segment at Met-161–Met-181 threads the bilayer. Residues Gly-182–Leu-191 lie on the Cytoplasmic side of the membrane. A helical transmembrane segment spans residues Gly-192 to Val-212. Residues Gly-213–Gln-214 are Extracellular-facing. The helical transmembrane segment at Ile-215–Val-235 threads the bilayer. The Cytoplasmic segment spans residues Cys-236–Tyr-242. A helical transmembrane segment spans residues Tyr-243–Met-263. At Lys-264–Lys-278 the chain is on the extracellular side. Residues Leu-279–Pro-299 form a helical membrane-spanning segment. Residues Glu-300 to Cys-373 are Cytoplasmic-facing. The helical transmembrane segment at Leu-374–Phe-394 threads the bilayer. The Extracellular segment spans residues Glu-395 to Ala-404. A helical transmembrane segment spans residues Phe-405 to Ile-425. Residues Ser-426 to Thr-433 lie on the Cytoplasmic side of the membrane. The chain crosses the membrane as a helical span at residues Ile-434–Phe-454. The Extracellular segment spans residues Gly-455–Gly-466. Residues Leu-467–Val-487 form a helical membrane-spanning segment. Over Ala-488–Arg-504 the chain is Cytoplasmic. A helical transmembrane segment spans residues Ile-505–Ser-525. The Extracellular portion of the chain corresponds to Asp-526 to Lys-532. A helical membrane pass occupies residues Thr-533 to Pro-553. Over Glu-554–Cys-616 the chain is Cytoplasmic. Residues Gly-587 to Cys-616 form a disordered region. Residues Lys-606–Cys-616 show a composition bias toward basic and acidic residues.

This sequence belongs to the major facilitator superfamily. Sugar transporter (TC 2.A.1.1) family.

Its subcellular location is the cell membrane. Its function is as follows. High-affinity uptake of alpha-glucosides such as maltose, turanose, isomaltose, alpha-methylglucoside, maltotriose, palatinose, trehalose, melezitose and glucose. Acts with the concomitant transport of protons into the cell (symport system). Provides an alternative and minor mechanism for growth on trehalose carbon source by transporting trehalose into the cytoplasm for conversion to glucose by neutral trehalase NTH1. This chain is General alpha-glucoside permease, found in Saccharomyces cerevisiae (strain CEN.PK113-7D) (Baker's yeast).